Consider the following 122-residue polypeptide: Large ribosomal subunit protein uL18 (122 aa).

The span at 1–19 (MSKLSRKQQTQKRHKRLRR) shows a compositional bias: basic residues. The disordered stretch occupies residues 1 to 27 (MSKLSRKQQTQKRHKRLRRNLSGTESR).

Belongs to the universal ribosomal protein uL18 family. As to quaternary structure, part of the 50S ribosomal subunit; part of the 5S rRNA/L5/L18/L25 subcomplex. Contacts the 5S and 23S rRNAs.

This is one of the proteins that bind and probably mediate the attachment of the 5S RNA into the large ribosomal subunit, where it forms part of the central protuberance. This Prochlorococcus marinus (strain NATL1A) protein is Large ribosomal subunit protein uL18.